Reading from the N-terminus, the 107-residue chain is Small ribosomal subunit protein uS10 (107 aa).

Belongs to the universal ribosomal protein uS10 family. In terms of assembly, part of the 30S ribosomal subunit.

Its function is as follows. Involved in the binding of tRNA to the ribosomes. The polypeptide is Small ribosomal subunit protein uS10 (Deinococcus deserti (strain DSM 17065 / CIP 109153 / LMG 22923 / VCD115)).